The primary structure comprises 570 residues: Multidrug and toxin extrusion protein 1 (570 aa).

Met-1 bears the N-acetylmethionine mark. At Met-1–Ala-37 the chain is on the cytoplasmic side. Residues Leu-38 to Ile-58 traverse the membrane as a helical segment. The Extracellular portion of the chain corresponds to Ser-59–Asp-72. Residues Ala-73–Ser-93 traverse the membrane as a helical segment. Residues Ser-94–Leu-123 lie on the Cytoplasmic side of the membrane. A helical membrane pass occupies residues Leu-124–Phe-144. Over Arg-145–Arg-152 the chain is Extracellular. The helical transmembrane segment at Leu-153–Leu-173 threads the bilayer. Over Gln-174–Lys-176 the chain is Cytoplasmic. Residues Tyr-177–Val-197 traverse the membrane as a helical segment. Residues Asn-198 to Ser-216 are Extracellular-facing. A helical membrane pass occupies residues Ala-217–Gly-237. Topologically, residues Lys-238–Trp-256 are cytoplasmic. Residues Ala-257–Ala-276 form a helical membrane-spanning segment. Topologically, residues Tyr-277 to Gln-295 are extracellular. A helical transmembrane segment spans residues Ser-296–Ala-316. The Cytoplasmic segment spans residues Ser-317–Ser-336. Residues Thr-337–Cys-357 traverse the membrane as a helical segment. The Extracellular portion of the chain corresponds to Lys-358–Asp-370. Residues Ile-371–Leu-391 traverse the membrane as a helical segment. Residues Ala-392 to Gly-408 lie on the Cytoplasmic side of the membrane. A helical transmembrane segment spans residues Ala-409 to Phe-429. Residues Ala-430–Gly-437 are Extracellular-facing. Residues Leu-438 to Ile-458 traverse the membrane as a helical segment. The Cytoplasmic segment spans residues Gln-459 to Arg-546. Residues Asp-508–Gly-534 are disordered. The segment covering Met-521–Asp-533 has biased composition (basic and acidic residues). A helical transmembrane segment spans residues Gly-547–Val-567. At Arg-568 to Gln-570 the chain is on the extracellular side.

Belongs to the multi antimicrobial extrusion (MATE) (TC 2.A.66.1) family. In terms of tissue distribution, widely expressed. The highest expression is found in adrenal gland, and to a lower extent in liver, skeletal muscle and kidney. In testis, primarily localized throughout the adluminal compartment of the seminiferous tubules with expression at the peritubular myoid cells and Leydig cells.

It is found in the cell membrane. The protein resides in the apical cell membrane. It carries out the reaction thiamine(out) + H(+)(in) = thiamine(in) + H(+)(out). It catalyses the reaction estrone 3-sulfate(in) + H(+)(out) = estrone 3-sulfate(out) + H(+)(in). The enzyme catalyses creatinine(in) + H(+)(out) = creatinine(out) + H(+)(in). The catalysed reaction is agmatine(in) + H(+)(out) = agmatine(out) + H(+)(in). In terms of biological role, multidrug efflux pump that functions as a H(+)/organic cation antiporter. Plays a physiological role in the excretion of cationic compounds including endogenous metabolites, drugs, toxins through the kidney and liver, into urine and bile respectively. Mediates the efflux of endogenous compounds such as creatinine, vitamin B1/thiamine, agmatine and estrone-3-sulfate. May also contribute to regulate the transport of cationic compounds in testis across the blood-testis-barrier. This is Multidrug and toxin extrusion protein 1 from Homo sapiens (Human).